Here is a 485-residue protein sequence, read N- to C-terminus: Probable glycine dehydrogenase (decarboxylating) subunit 2 (485 aa).

K273 carries the N6-(pyridoxal phosphate)lysine modification.

It belongs to the GcvP family. C-terminal subunit subfamily. In terms of assembly, the glycine cleavage system is composed of four proteins: P, T, L and H. In this organism, the P 'protein' is a heterodimer of two subunits. The cofactor is pyridoxal 5'-phosphate.

The catalysed reaction is N(6)-[(R)-lipoyl]-L-lysyl-[glycine-cleavage complex H protein] + glycine + H(+) = N(6)-[(R)-S(8)-aminomethyldihydrolipoyl]-L-lysyl-[glycine-cleavage complex H protein] + CO2. Functionally, the glycine cleavage system catalyzes the degradation of glycine. The P protein binds the alpha-amino group of glycine through its pyridoxal phosphate cofactor; CO(2) is released and the remaining methylamine moiety is then transferred to the lipoamide cofactor of the H protein. The polypeptide is Probable glycine dehydrogenase (decarboxylating) subunit 2 (Oceanobacillus iheyensis (strain DSM 14371 / CIP 107618 / JCM 11309 / KCTC 3954 / HTE831)).